A 1270-amino-acid chain; its full sequence is ATP-dependent helicase/nuclease subunit A (1270 aa).

Positions 3–476 (TKWTEEQELA…IMLYKNFRSR (474 aa)) constitute a UvrD-like helicase ATP-binding domain. ATP is bound at residue 24-31 (AAAGSGKT). Residues 528-823 (IENLKVAGDI…RIMSIHKSKG (296 aa)) enclose the UvrD-like helicase C-terminal domain.

The protein belongs to the helicase family. AddA subfamily. Heterodimer of AddA and AddB/RexB. It depends on Mg(2+) as a cofactor.

It carries out the reaction Couples ATP hydrolysis with the unwinding of duplex DNA by translocating in the 3'-5' direction.. The enzyme catalyses ATP + H2O = ADP + phosphate + H(+). The heterodimer acts as both an ATP-dependent DNA helicase and an ATP-dependent, dual-direction single-stranded exonuclease. Recognizes the chi site generating a DNA molecule suitable for the initiation of homologous recombination. The AddA nuclease domain is required for chi fragment generation; this subunit has the helicase and 3' -&gt; 5' nuclease activities. This is ATP-dependent helicase/nuclease subunit A from Clostridium perfringens (strain SM101 / Type A).